The sequence spans 458 residues: Argininosuccinate lyase (458 aa).

This sequence belongs to the lyase 1 family. Argininosuccinate lyase subfamily.

The protein resides in the cytoplasm. The catalysed reaction is 2-(N(omega)-L-arginino)succinate = fumarate + L-arginine. It participates in amino-acid biosynthesis; L-arginine biosynthesis; L-arginine from L-ornithine and carbamoyl phosphate: step 3/3. This Pseudoalteromonas atlantica (strain T6c / ATCC BAA-1087) protein is Argininosuccinate lyase.